Consider the following 158-residue polypeptide: GAF domain-containing protein A (158 aa).

The region spanning 32-158 (NQIANLANVT…LTQILKLLDN (127 aa)) is the GAF domain.

The protein belongs to the free Met sulfoxide reductase family.

In Dictyostelium discoideum (Social amoeba), this protein is GAF domain-containing protein A (gafA).